Reading from the N-terminus, the 384-residue chain is Mitogen-activated protein kinase 8 (384 aa).

Positions 26–321 (YQNLKPIGSG…VDEALQHPYI (296 aa)) constitute a Protein kinase domain. ATP contacts are provided by residues 32–40 (IGSGAQGIV) and K55. C116 bears the S-nitrosocysteine mark. D151 serves as the catalytic Proton acceptor. Residue T183 is modified to Phosphothreonine; by MAP2K7. Residues 183-185 (TPY) carry the TXY motif. Y185 carries the post-translational modification Phosphotyrosine; by MAP2K4. A Phosphoserine modification is found at S377.

This sequence belongs to the protein kinase superfamily. CMGC Ser/Thr protein kinase family. MAP kinase subfamily. As to quaternary structure, binds to at least four scaffolding proteins, MAPK8IP1/JIP-1, MAPK8IP2/JIP-2, MAPK8IP3/JIP-3/JSAP1 and SPAG9/MAPK8IP4/JIP-4. These proteins also bind other components of the JNK signaling pathway. Forms a complex with MAPK8IP1 and ARHGEF28. Interacts with TP53 and WWOX. Interacts with JAMP. Interacts with NFATC4. Interacts with MECOM; regulates JNK signaling. Interacts with PIN1; this interaction mediates MAPK8 conformational changes leading to the binding of MAPK8 to its substrates. Interacts with HSF1 (via D domain and preferentially with hyperphosphorylated form); this interaction occurs under both normal growth conditions and immediately upon heat shock. Interacts (phosphorylated form) with NFE2; the interaction phosphorylates NFE2 in undifferentiated cells. Interacts with GRIPAP1. Interacts with POU5F1; phosphorylates POU5F1 at 'Ser-347'. Found in a complex with SH3RF1, RAC1, MAP3K11/MLK3, MAP2K7/MKK7 and MAPK8IP1/JIP1. Found in a complex with SH3RF1, RAC2, MAP3K7/TAK1, MAP2K7/MKK7, MAPK8IP1/JIP1 and MAPK9/JNK2. Mg(2+) serves as cofactor. Post-translationally, phosphorylated by TAOK2. Dually phosphorylated on Thr-183 and Tyr-185 by MAP2K7 and MAP2K4, which activates the enzyme. May be phosphorylated at Thr-183 and Tyr-185 by MAP3K1/MEKK1. Phosphorylated form is more concentrated at synapses than none-phosphorylated. In terms of tissue distribution, brain (at protein level).

It localises to the cytoplasm. The protein resides in the nucleus. Its subcellular location is the synapse. It carries out the reaction L-seryl-[protein] + ATP = O-phospho-L-seryl-[protein] + ADP + H(+). It catalyses the reaction L-threonyl-[protein] + ATP = O-phospho-L-threonyl-[protein] + ADP + H(+). With respect to regulation, inhibited by SERPINB3. Activated by threonine and tyrosine phosphorylation by either of two dual specificity kinases, MAP2K4 and MAP2K7. MAP2K4 shows a strong preference for Tyr-185 while MAP2K7 phosphorylates Tyr-183 preferentially. Inhibited by dual specificity phosphatases, such as DUSP1. Functionally, serine/threonine-protein kinase involved in various processes such as cell proliferation, differentiation, migration, transformation and programmed cell death. Extracellular stimuli such as pro-inflammatory cytokines or physical stress stimulate the stress-activated protein kinase/c-Jun N-terminal kinase (SAP/JNK) signaling pathway. In this cascade, two dual specificity kinases MAP2K4/MKK4 and MAP2K7/MKK7 phosphorylate and activate MAPK8/JNK1. In turn, MAPK8/JNK1 phosphorylates a number of transcription factors, primarily components of AP-1 such as JUN, JDP2 and ATF2 and thus regulates AP-1 transcriptional activity. Phosphorylates the replication licensing factor CDT1, inhibiting the interaction between CDT1 and the histone H4 acetylase HBO1 to replication origins. Loss of this interaction abrogates the acetylation required for replication initiation. Promotes stressed cell apoptosis by phosphorylating key regulatory factors including p53/TP53 and Yes-associates protein YAP1. In T-cells, MAPK8 and MAPK9 are required for polarized differentiation of T-helper cells into Th1 cells. Contributes to the survival of erythroid cells by phosphorylating the antagonist of cell death BAD upon EPO stimulation. Mediates starvation-induced BCL2 phosphorylation, BCL2 dissociation from BECN1, and thus activation of autophagy. Phosphorylates STMN2 and hence regulates microtubule dynamics, controlling neurite elongation in cortical neurons. In the developing brain, through its cytoplasmic activity on STMN2, negatively regulates the rate of exit from multipolar stage and of radial migration from the ventricular zone. Phosphorylates several other substrates including heat shock factor protein 4 (HSF4), the deacetylase SIRT1, ELK1, or the E3 ligase ITCH. Phosphorylates the CLOCK-BMAL1 heterodimer and plays a role in the regulation of the circadian clock. Phosphorylates the heat shock transcription factor HSF1, suppressing HSF1-induced transcriptional activity. Phosphorylates POU5F1, which results in the inhibition of POU5F1's transcriptional activity and enhances its proteasomal degradation. Phosphorylates JUND and this phosphorylation is inhibited in the presence of MEN1. In neurons, phosphorylates SYT4 which captures neuronal dense core vesicles at synapses. Phosphorylates EIF4ENIF1/4-ET in response to oxidative stress, promoting P-body assembly. Phosphorylates SIRT6 in response to oxidative stress, stimulating its mono-ADP-ribosyltransferase activity. Phosphorylates NLRP3, promoting assembly of the NLRP3 inflammasome. Phosphorylates ALKBH5 in response to reactive oxygen species (ROS), promoting ALKBH5 sumoylation and inactivation. The protein is Mitogen-activated protein kinase 8 (Mapk8) of Mus musculus (Mouse).